Reading from the N-terminus, the 332-residue chain is Putative D-threonate 4-phosphate dehydrogenase (332 aa).

Substrate-binding residues include histidine 140 and threonine 141. A divalent metal cation-binding residues include histidine 170, histidine 214, and histidine 270. Substrate is bound by residues lysine 278, asparagine 287, and arginine 296.

This sequence belongs to the PdxA family. PdxA2 subfamily. As to quaternary structure, homodimer. It depends on a divalent metal cation as a cofactor.

The enzyme catalyses 4-O-phospho-D-threonate + NAD(+) = dihydroxyacetone phosphate + CO2 + NADH. Its function is as follows. Catalyzes the NAD-dependent oxidation and subsequent decarboxylation of D-threonate 4-phosphate to produce dihydroxyacetone phosphate (DHAP). The polypeptide is Putative D-threonate 4-phosphate dehydrogenase (Oceanobacillus iheyensis (strain DSM 14371 / CIP 107618 / JCM 11309 / KCTC 3954 / HTE831)).